A 631-amino-acid polypeptide reads, in one-letter code: Nucleoside triphosphatase I (631 aa).

One can recognise a Helicase ATP-binding domain in the interval 42–204; the sequence is FLGLDTMHSI…TMIVNLLRPK (163 aa). Residue 55 to 62 coordinates ATP; that stretch reads HDTGVGKT. Positions 141–144 match the DEXH box motif; the sequence is DECH. A Helicase C-terminal domain is found at 367-536; sequence KFTEVCLKIL…LFKVFKESSI (170 aa). Residues 457 to 524 form a binding to the cap-specific mRNA (nucleoside-2'-O-)-methyltransferase region; sequence DIFILDMTWN…NIIKTKSKEF (68 aa).

This sequence belongs to the helicase family. NPH I subfamily. In terms of assembly, monomer. Interacts (via C-terminus) with RAP94 (via N-terminus). Interacts with the cap-specific mRNA (nucleoside-2'-O-)-methyltransferase.

The protein localises to the virion. The catalysed reaction is a ribonucleoside 5'-triphosphate + H2O = a ribonucleoside 5'-diphosphate + phosphate + H(+). Its function is as follows. DNA-dependent ATPase required for providing the needed energy to achieve the termination of early transcripts. Acts in concert with the RAP94 subunit of the virion RNA polymerase and the capping enzyme/VTF to catalyze release of UUUUUNU-containing nascent RNA from the elongation complex. NPH-I must bind ssDNA in order to exhibit ATPase activity. This chain is Nucleoside triphosphatase I (NPH1), found in Erythrocebus patas (Red guenon).